Here is a 154-residue protein sequence, read N- to C-terminus: S-ribosylhomocysteine lyase (154 aa).

Residues His-57, His-61, and Cys-124 each contribute to the Fe cation site.

This sequence belongs to the LuxS family. As to quaternary structure, homodimer. The cofactor is Fe cation.

It catalyses the reaction S-(5-deoxy-D-ribos-5-yl)-L-homocysteine = (S)-4,5-dihydroxypentane-2,3-dione + L-homocysteine. In terms of biological role, involved in the synthesis of autoinducer 2 (AI-2) which is secreted by bacteria and is used to communicate both the cell density and the metabolic potential of the environment. The regulation of gene expression in response to changes in cell density is called quorum sensing. Catalyzes the transformation of S-ribosylhomocysteine (RHC) to homocysteine (HC) and 4,5-dihydroxy-2,3-pentadione (DPD). This Exiguobacterium sibiricum (strain DSM 17290 / CCUG 55495 / CIP 109462 / JCM 13490 / 255-15) protein is S-ribosylhomocysteine lyase.